We begin with the raw amino-acid sequence, 250 residues long: 4-hydroxy-tetrahydrodipicolinate reductase (250 aa).

Residues 9 to 14 (GATGKM), 79 to 81 (GTT), and 103 to 106 (SANM) each bind NAD(+). H135 serves as the catalytic Proton donor/acceptor. H136 lines the (S)-2,3,4,5-tetrahydrodipicolinate pocket. The Proton donor role is filled by K139. 145-146 (GT) provides a ligand contact to (S)-2,3,4,5-tetrahydrodipicolinate.

The protein belongs to the DapB family.

It localises to the cytoplasm. The catalysed reaction is (S)-2,3,4,5-tetrahydrodipicolinate + NAD(+) + H2O = (2S,4S)-4-hydroxy-2,3,4,5-tetrahydrodipicolinate + NADH + H(+). It carries out the reaction (S)-2,3,4,5-tetrahydrodipicolinate + NADP(+) + H2O = (2S,4S)-4-hydroxy-2,3,4,5-tetrahydrodipicolinate + NADPH + H(+). The protein operates within amino-acid biosynthesis; L-lysine biosynthesis via DAP pathway; (S)-tetrahydrodipicolinate from L-aspartate: step 4/4. Catalyzes the conversion of 4-hydroxy-tetrahydrodipicolinate (HTPA) to tetrahydrodipicolinate. The chain is 4-hydroxy-tetrahydrodipicolinate reductase from Rickettsia bellii (strain OSU 85-389).